An 815-amino-acid polypeptide reads, in one-letter code: Leucine--tRNA ligase (815 aa).

Residues 40-50 (PYPSGRIHMGH) carry the 'HIGH' region motif. The 'KMSKS' region motif lies at 583 to 587 (KMSKS). An ATP-binding site is contributed by Lys586.

It belongs to the class-I aminoacyl-tRNA synthetase family.

Its subcellular location is the cytoplasm. It catalyses the reaction tRNA(Leu) + L-leucine + ATP = L-leucyl-tRNA(Leu) + AMP + diphosphate. This Nitratiruptor sp. (strain SB155-2) protein is Leucine--tRNA ligase.